A 234-amino-acid polypeptide reads, in one-letter code: Orotidine 5'-phosphate decarboxylase (234 aa).

Substrate is bound by residues aspartate 14, lysine 36, 63 to 72 (DLKFHDIPNT), threonine 123, arginine 184, glutamine 193, glycine 213, and arginine 214. Lysine 65 functions as the Proton donor in the catalytic mechanism.

This sequence belongs to the OMP decarboxylase family. Type 1 subfamily. In terms of assembly, homodimer.

It catalyses the reaction orotidine 5'-phosphate + H(+) = UMP + CO2. The protein operates within pyrimidine metabolism; UMP biosynthesis via de novo pathway; UMP from orotate: step 2/2. In terms of biological role, catalyzes the decarboxylation of orotidine 5'-monophosphate (OMP) to uridine 5'-monophosphate (UMP). The sequence is that of Orotidine 5'-phosphate decarboxylase from Psychromonas ingrahamii (strain DSM 17664 / CCUG 51855 / 37).